Here is a 367-residue protein sequence, read N- to C-terminus: MSVLRAVLVQDMARALLLAAAAFVLTLIIGGWWVRFARRHKLGKRIRPDGPQSHLVKVGTPTMGGIMIVSTVLILTILFNLVDRWSMLLPLGVMVSFAVLGAIDDWLSLTGSRSKTHGFTVRFKFWIMMAVAFVASLALYLPQPYGLEHEGLVQIPFVGEVNIGLWFIPIAVLIIVFISNAVNITDGLDSLAGWNLTLAFGAYGVITFLAEPRLTNLMAFCFTVVGACAAFLWYNAYPAQVFMGDLGALALGATLAVVALQSQQWLLLPVIGIVFVVEALSTMIQTGYFKWTKWRYGEGRRIFKMAPLHHHFELLGWSQPQVTQRFVLIGTVAAMVGISLALIFGPPATGLQVDQPGIIVIEGDGSR.

10 helical membrane passes run 16–36 (LLLA…WVRF), 62–82 (TMGG…FNLV), 87–107 (MLLP…DDWL), 125–145 (FWIM…PQPY), 158–178 (VGEV…IVFI), 190–210 (SLAG…TFLA), 214–234 (LTNL…FLWY), 240–260 (QVFM…VVAL), 264–284 (QWLL…STMI), and 326–346 (FVLI…IFGP).

The protein belongs to the glycosyltransferase 4 family. MraY subfamily. Mg(2+) serves as cofactor.

The protein resides in the cell membrane. The enzyme catalyses UDP-N-acetyl-alpha-D-muramoyl-L-alanyl-gamma-D-glutamyl-meso-2,6-diaminopimeloyl-D-alanyl-D-alanine + di-trans,octa-cis-undecaprenyl phosphate = di-trans,octa-cis-undecaprenyl diphospho-N-acetyl-alpha-D-muramoyl-L-alanyl-D-glutamyl-meso-2,6-diaminopimeloyl-D-alanyl-D-alanine + UMP. The protein operates within cell wall biogenesis; peptidoglycan biosynthesis. Functionally, catalyzes the initial step of the lipid cycle reactions in the biosynthesis of the cell wall peptidoglycan: transfers peptidoglycan precursor phospho-MurNAc-pentapeptide from UDP-MurNAc-pentapeptide onto the lipid carrier undecaprenyl phosphate, yielding undecaprenyl-pyrophosphoryl-MurNAc-pentapeptide, known as lipid I. This chain is Phospho-N-acetylmuramoyl-pentapeptide-transferase, found in Chloroflexus aurantiacus (strain ATCC 29366 / DSM 635 / J-10-fl).